The sequence spans 398 residues: Dihydrolipoyllysine-residue succinyltransferase component of 2-oxoglutarate dehydrogenase complex (398 aa).

A Lipoyl-binding domain is found at 2 to 77 (SIKIIIPSLG…TVGEEVGEIN (76 aa)). Lys-43 bears the N6-lipoyllysine mark. One can recognise a Peripheral subunit-binding (PSBD) domain in the interval 112–149 (ILAPSVQKLVTENKLDPNNIKGTGRGGRITKYDVLETI). Active-site residues include His-369 and Asp-373.

Belongs to the 2-oxoacid dehydrogenase family. As to quaternary structure, forms a 24-polypeptide structural core with octahedral symmetry. Part of the 2-oxoglutarate dehydrogenase (OGDH) complex composed of E1 (2-oxoglutarate dehydrogenase), E2 (dihydrolipoamide succinyltransferase) and E3 (dihydrolipoamide dehydrogenase); the complex contains multiple copies of the three enzymatic components (E1, E2 and E3). (R)-lipoate serves as cofactor.

The enzyme catalyses N(6)-[(R)-dihydrolipoyl]-L-lysyl-[protein] + succinyl-CoA = N(6)-[(R)-S(8)-succinyldihydrolipoyl]-L-lysyl-[protein] + CoA. It participates in amino-acid degradation; L-lysine degradation via saccharopine pathway; glutaryl-CoA from L-lysine: step 6/6. In terms of biological role, E2 component of the 2-oxoglutarate dehydrogenase (OGDH) complex which catalyzes the second step in the conversion of 2-oxoglutarate to succinyl-CoA and CO(2). The polypeptide is Dihydrolipoyllysine-residue succinyltransferase component of 2-oxoglutarate dehydrogenase complex (sucB) (Rickettsia typhi (strain ATCC VR-144 / Wilmington)).